The chain runs to 258 residues: uncharacterized protein (258 aa).

The next 4 helical transmembrane spans lie at 33–53, 59–79, 88–108, and 140–160; these read LFVIFQVIISIVLLSLSVTTN, FDSWYYFASHLILSLFGIFVF, LLYLYVILLSGLLITASFSFF, and IIALIVVEGVALHPNLSWLIQ. Residues 237–258 form a disordered region; it reads NNKINSELQPPSILNKNSKPIE. The segment covering 242 to 258 has biased composition (polar residues); sequence SELQPPSILNKNSKPIE.

It localises to the membrane. This is an uncharacterized protein from Dictyostelium discoideum (Social amoeba).